The sequence spans 183 residues: Hypoxanthine/guanine phosphoribosyltransferase (183 aa).

The protein belongs to the purine/pyrimidine phosphoribosyltransferase family. Archaeal HPRT subfamily. In terms of assembly, homodimer.

Its subcellular location is the cytoplasm. It catalyses the reaction IMP + diphosphate = hypoxanthine + 5-phospho-alpha-D-ribose 1-diphosphate. The catalysed reaction is GMP + diphosphate = guanine + 5-phospho-alpha-D-ribose 1-diphosphate. The protein operates within purine metabolism; IMP biosynthesis via salvage pathway; IMP from hypoxanthine: step 1/1. Functionally, catalyzes a salvage reaction resulting in the formation of IMP that is energically less costly than de novo synthesis. This chain is Hypoxanthine/guanine phosphoribosyltransferase, found in Methanocaldococcus vulcanius (strain ATCC 700851 / DSM 12094 / M7) (Methanococcus vulcanius).